Here is a 276-residue protein sequence, read N- to C-terminus: Rhomboid protease GlpG (276 aa).

The next 6 helical transmembrane spans lie at 94–114 (GPVT…MSLI), 142–162 (IFMH…WYLG), 169–189 (LGSG…GYVQ), 192–212 (FSGP…GYVW), 229–249 (LIIF…GMSM), and 250–270 (ANGA…VDTL). Ser201 serves as the catalytic Nucleophile. The active site involves His254.

Belongs to the peptidase S54 family.

It is found in the cell inner membrane. It catalyses the reaction Cleaves type-1 transmembrane domains using a catalytic dyad composed of serine and histidine that are contributed by different transmembrane domains.. Rhomboid-type serine protease that catalyzes intramembrane proteolysis. This is Rhomboid protease GlpG from Salmonella agona (strain SL483).